The primary structure comprises 205 residues: ATP-dependent Clp protease proteolytic subunit (205 aa).

The active-site Nucleophile is serine 109. The active site involves histidine 134.

The protein belongs to the peptidase S14 family. In terms of assembly, fourteen ClpP subunits assemble into 2 heptameric rings which stack back to back to give a disk-like structure with a central cavity, resembling the structure of eukaryotic proteasomes.

It is found in the cytoplasm. It carries out the reaction Hydrolysis of proteins to small peptides in the presence of ATP and magnesium. alpha-casein is the usual test substrate. In the absence of ATP, only oligopeptides shorter than five residues are hydrolyzed (such as succinyl-Leu-Tyr-|-NHMec, and Leu-Tyr-Leu-|-Tyr-Trp, in which cleavage of the -Tyr-|-Leu- and -Tyr-|-Trp bonds also occurs).. Functionally, cleaves peptides in various proteins in a process that requires ATP hydrolysis. Has a chymotrypsin-like activity. Plays a major role in the degradation of misfolded proteins. The chain is ATP-dependent Clp protease proteolytic subunit from Buchnera aphidicola subsp. Baizongia pistaciae (strain Bp).